The following is a 94-amino-acid chain: Integration host factor subunit beta (94 aa).

This sequence belongs to the bacterial histone-like protein family. In terms of assembly, heterodimer of an alpha and a beta chain.

Its function is as follows. This protein is one of the two subunits of integration host factor, a specific DNA-binding protein that functions in genetic recombination as well as in transcriptional and translational control. The chain is Integration host factor subunit beta (ihfB) from Serratia marcescens.